The following is a 58-amino-acid chain: Large ribosomal subunit protein uL30 (58 aa).

This sequence belongs to the universal ribosomal protein uL30 family. In terms of assembly, part of the 50S ribosomal subunit.

The polypeptide is Large ribosomal subunit protein uL30 (Pseudomonas aeruginosa (strain LESB58)).